Consider the following 254-residue polypeptide: Alcohol dehydrogenase 1 (254 aa).

Position 10 to 33 (Phe-10 to Leu-33) interacts with NAD(+). Ser-138 serves as a coordination point for substrate. Tyr-151 functions as the Proton acceptor in the catalytic mechanism.

It belongs to the short-chain dehydrogenases/reductases (SDR) family. In terms of assembly, homodimer.

The enzyme catalyses a primary alcohol + NAD(+) = an aldehyde + NADH + H(+). The catalysed reaction is a secondary alcohol + NAD(+) = a ketone + NADH + H(+). In Drosophila navojoa (Fruit fly), this protein is Alcohol dehydrogenase 1 (Adh1).